The following is a 405-amino-acid chain: Tryptophan synthase beta chain (405 aa).

N6-(pyridoxal phosphate)lysine is present on lysine 98.

This sequence belongs to the TrpB family. Tetramer of two alpha and two beta chains. It depends on pyridoxal 5'-phosphate as a cofactor.

It carries out the reaction (1S,2R)-1-C-(indol-3-yl)glycerol 3-phosphate + L-serine = D-glyceraldehyde 3-phosphate + L-tryptophan + H2O. It participates in amino-acid biosynthesis; L-tryptophan biosynthesis; L-tryptophan from chorismate: step 5/5. Functionally, the beta subunit is responsible for the synthesis of L-tryptophan from indole and L-serine. This is Tryptophan synthase beta chain from Xanthomonas oryzae pv. oryzae (strain MAFF 311018).